The chain runs to 629 residues: Dolichyl-diphosphooligosaccharide--protein glycosyltransferase subunit 2 (629 aa).

The N-terminal stretch at Met1–Ala22 is a signal peptide. Topologically, residues Leu23–Val541 are lumenal. Asn106 carries N-linked (GlcNAc...) asparagine glycosylation. A Glycyl lysine isopeptide (Lys-Gly) (interchain with G-Cter in ubiquitin) cross-link involves residue Lys154. A helical membrane pass occupies residues Val542 to Ile562. The Cytoplasmic segment spans residues Arg563–Asn570. A helical membrane pass occupies residues Phe571–Tyr591. Over Trp592–Gln594 the chain is Lumenal. Residues Leu595 to Gly615 form a helical membrane-spanning segment. At Asn616–His629 the chain is on the cytoplasmic side.

This sequence belongs to the SWP1 family. As to quaternary structure, component of the oligosaccharyltransferase (OST) complex. OST exists in two different complex forms which contain common core subunits RPN1, RPN2, OST48, OST4, DAD1 and TMEM258, either STT3A or STT3B as catalytic subunits, and form-specific accessory subunits. STT3A complex assembly occurs through the formation of 3 subcomplexes. Subcomplex 1 contains RPN1 and TMEM258, subcomplex 2 contains the STT3A-specific subunits STT3A, DC2/OSTC, and KCP2 as well as the core subunit OST4, and subcomplex 3 contains RPN2, DAD1, and OST48. The STT3A complex can form stable complexes with the Sec61 complex or with both the Sec61 and TRAP complexes. Interacts with DDI2. Interacts with TMEM35A/NACHO.

The protein localises to the endoplasmic reticulum. Its subcellular location is the endoplasmic reticulum membrane. It participates in protein modification; protein glycosylation. Functionally, subunit of the oligosaccharyl transferase (OST) complex that catalyzes the initial transfer of a defined glycan (Glc(3)Man(9)GlcNAc(2) in eukaryotes) from the lipid carrier dolichol-pyrophosphate to an asparagine residue within an Asn-X-Ser/Thr consensus motif in nascent polypeptide chains, the first step in protein N-glycosylation. N-glycosylation occurs cotranslationally and the complex associates with the Sec61 complex at the channel-forming translocon complex that mediates protein translocation across the endoplasmic reticulum (ER). All subunits are required for a maximal enzyme activity. The chain is Dolichyl-diphosphooligosaccharide--protein glycosyltransferase subunit 2 from Sus scrofa (Pig).